The following is a 181-amino-acid chain: Peptidyl-prolyl cis-trans isomerase H (181 aa).

The region spanning F17–E180 is the PPIase cyclophilin-type domain.

It belongs to the cyclophilin-type PPIase family. PPIase H subfamily.

It is found in the nucleus. The enzyme catalyses [protein]-peptidylproline (omega=180) = [protein]-peptidylproline (omega=0). In terms of biological role, PPIases accelerate the folding of proteins. It catalyzes the cis-trans isomerization of proline imidic peptide bonds in oligopeptides. The polypeptide is Peptidyl-prolyl cis-trans isomerase H (cyp3) (Aspergillus fumigatus (strain ATCC MYA-4609 / CBS 101355 / FGSC A1100 / Af293) (Neosartorya fumigata)).